Here is a 512-residue protein sequence, read N- to C-terminus: Delta(14)-sterol reductase (512 aa).

8 helical membrane-spanning segments follow: residues 27–47 (IGAS…GFLC), 100–120 (AVLG…LLPA), 140–160 (ACLS…VRGP), 172–192 (YIQL…YVYL), 242–262 (SFME…AFAA), 278–298 (WTPL…VIIS), 324–344 (FGFM…SIQA), and 353–373 (ALGP…YYIF). NADP(+)-binding positions include Lys-380, Arg-384, Leu-407, Trp-412, and 419 to 420 (NY). 2 helical membrane passes run 418–438 (INYL…LAAG) and 458–478 (MKGA…ILLI). Residues Asp-484, 488 to 492 (CRRKY), and Tyr-499 contribute to the NADP(+) site.

Belongs to the ERG4/ERG24 family.

It is found in the membrane. It carries out the reaction 4,4-dimethyl-5alpha-cholesta-8,24-dien-3beta-ol + NADP(+) = 4,4-dimethyl-5alpha-cholesta-8,14,24-trien-3beta-ol + NADPH + H(+). The protein operates within steroid biosynthesis; zymosterol biosynthesis; zymosterol from lanosterol: step 2/6. Reduces the C14=C15 double bond of 4,4-dimethyl-cholesta-8,14,24-trienol to produce 4,4-dimethyl-cholesta-8,24-dienol. In Septoria lycopersici (Tomato leaf spot fungus), this protein is Delta(14)-sterol reductase (ERG3).